Here is a 211-residue protein sequence, read N- to C-terminus: Protein GrpE (211 aa).

Basic and acidic residues predominate over residues 1–13; that stretch reads MVDKDEEQIKQNV. Positions 1-38 are disordered; it reads MVDKDEEQIKQNVEEDLSSTVEQTGEENIEFPSAPNHP.

The protein belongs to the GrpE family. In terms of assembly, homodimer.

It is found in the cytoplasm. Functionally, participates actively in the response to hyperosmotic and heat shock by preventing the aggregation of stress-denatured proteins, in association with DnaK and GrpE. It is the nucleotide exchange factor for DnaK and may function as a thermosensor. Unfolded proteins bind initially to DnaJ; upon interaction with the DnaJ-bound protein, DnaK hydrolyzes its bound ATP, resulting in the formation of a stable complex. GrpE releases ADP from DnaK; ATP binding to DnaK triggers the release of the substrate protein, thus completing the reaction cycle. Several rounds of ATP-dependent interactions between DnaJ, DnaK and GrpE are required for fully efficient folding. The protein is Protein GrpE of Protochlamydia amoebophila (strain UWE25).